Here is a 121-residue protein sequence, read N- to C-terminus: Ribulose bisphosphate carboxylase small subunit (121 aa).

Belongs to the RuBisCO small chain family. As to quaternary structure, heterohexadecamer of 8 large and 8 small subunits.

Its function is as follows. RuBisCO catalyzes two reactions: the carboxylation of D-ribulose 1,5-bisphosphate, the primary event in carbon dioxide fixation, as well as the oxidative fragmentation of the pentose substrate. Both reactions occur simultaneously and in competition at the same active site. Although the small subunit is not catalytic it is essential for maximal activity. The sequence is that of Ribulose bisphosphate carboxylase small subunit from Alvinoconcha hessleri symbiotic bacterium.